The primary structure comprises 377 residues: Interferon gamma receptor 1 (377 aa).

Positions 1 to 23 (MRTQIYISVTVLILLLKKSDLEA) are cleaved as a signal peptide. Over 24–235 (VRVPSPESVS…IRRYTPFTVY (212 aa)) the chain is Extracellular. In terms of domain architecture, Fibronectin type-III spans 26-117 (VPSPESVSVQ…DFFIFSFNEN (92 aa)). N-linked (GlcNAc...) asparagine glycosylation is found at Asn78 and Asn186. A helical membrane pass occupies residues 236–256 (LYPVLGVTLTLLFITGIIILL). Topologically, residues 257–377 (EKKCNSEMKK…TVDSYGPRLL (121 aa)) are cytoplasmic. Positions 326-377 (VYSEDKNSYGPNDLVEDEQSDLSDFYDCPHAPKQKREMSPGDTVDSYGPRLL) are disordered.

It belongs to the type II cytokine receptor family. Highly expressed in spleen. Also detected in brain, kidney, gill, intestine and heart. Expressed at very low levels in muscle. In immune cell populations, shows highest expression in monocytes, and slightly lower expression in peripheral blood leukocytes, splenocytes, neutrophils and mature macrophages.

It localises to the cell membrane. Its function is as follows. Receptor which shows binding specificity for the cytokine ifng1r (interferon gamma-related). The protein is Interferon gamma receptor 1 of Carassius auratus (Goldfish).